Here is a 67-residue protein sequence, read N- to C-terminus: MPKMKTKSGAKKRFRVRPGGTVKRGQAFKRHILTKKTTKNKRHLRGAVTVHETNMGHMAQMLPGQGI.

Over residues Met1–Val16 the composition is skewed to basic residues. Residues Met1–Gly25 form a disordered region.

The protein belongs to the bacterial ribosomal protein bL35 family.

This is Large ribosomal subunit protein bL35 from Polaromonas sp. (strain JS666 / ATCC BAA-500).